Here is a 355-residue protein sequence, read N- to C-terminus: Syntaxin-5 (355 aa).

At Met-1 to Arg-333 the chain is on the cytoplasmic side. Positions Pro-28–Asp-37 are enriched in polar residues. A disordered region spans residues Pro-28–Leu-47. The IxM motif; signal for cargo packaging into COPII-coated vesicles motif lies at Ile-245–Met-247. The t-SNARE coiled-coil homology domain occupies Asp-263–Tyr-325. Residues Phe-287–Ala-318 adopt a coiled-coil conformation. Residues Trp-334 to Leu-354 traverse the membrane as a helical; Anchor for type IV membrane protein segment. Position 355 (Ala-355) is a topological domain, vesicular.

The protein belongs to the syntaxin family. Part of a ternary complex containing STX5A, NSFL1C and VCP. Part of a unique SNARE complex composed of the Golgi SNAREs GOSR1, GOSR2 and YKT6. This complex also includes VTI1A. Component of a SNARE complex consisting of STX5, YKT6, GOSR1 and BET1L. Interacts with BET1L. Interacts with BET1. Interacts with COG4. Interacts with GM130/GOLGA2. Interacts (via IxM motif) with SEC24C and SEC24D; mediates STX5 packaging into COPII-coated vesicles. Interacts with VLDLR; this interaction mediates VLDLR translocation from the endoplasmic reticulum to the plasma membrane.

It localises to the endoplasmic reticulum-Golgi intermediate compartment membrane. It is found in the golgi apparatus membrane. Functionally, mediates endoplasmic reticulum to Golgi transport. Together with p115/USO1 and GM130/GOLGA2, involved in vesicle tethering and fusion at the cis-Golgi membrane to maintain the stacked and inter-connected structure of the Golgi apparatus. The chain is Syntaxin-5 (STX5) from Bos taurus (Bovine).